Here is a 59-residue protein sequence, read N- to C-terminus: Protein translocase subunit SecE (59 aa).

Residues I30–I50 form a helical membrane-spanning segment.

Belongs to the SecE/SEC61-gamma family. As to quaternary structure, component of the Sec protein translocase complex. Heterotrimer consisting of SecY, SecE and SecG subunits. The heterotrimers can form oligomers, although 1 heterotrimer is thought to be able to translocate proteins. Interacts with the ribosome. Interacts with SecDF, and other proteins may be involved. Interacts with SecA.

The protein localises to the cell membrane. In terms of biological role, essential subunit of the Sec protein translocation channel SecYEG. Clamps together the 2 halves of SecY. May contact the channel plug during translocation. This is Protein translocase subunit SecE from Bacillus licheniformis.